Reading from the N-terminus, the 444-residue chain is Deoxyguanosinetriphosphate triphosphohydrolase-like protein (444 aa).

One can recognise an HD domain in the interval 66–259 (RLTHSLEAAQ…MELADDIAYG (194 aa)).

This sequence belongs to the dGTPase family. Type 2 subfamily.

In Vibrio campbellii (strain ATCC BAA-1116), this protein is Deoxyguanosinetriphosphate triphosphohydrolase-like protein.